The sequence spans 311 residues: Malate dehydrogenase (311 aa).

Residues 7-13 and Asp34 each bind NAD(+); that span reads GAAGGIG. Substrate-binding residues include Arg81 and Arg87. NAD(+) contacts are provided by residues Asn94 and 117 to 119; that span reads ITN. Residues Asn119 and Arg153 each coordinate substrate. His177 serves as the catalytic Proton acceptor. NAD(+) is bound at residue Met227.

Belongs to the LDH/MDH superfamily. MDH type 1 family. Homodimer.

The enzyme catalyses (S)-malate + NAD(+) = oxaloacetate + NADH + H(+). Its function is as follows. Catalyzes the reversible oxidation of malate to oxaloacetate. The polypeptide is Malate dehydrogenase (Aeromonas salmonicida (strain A449)).